Here is a 529-residue protein sequence, read N- to C-terminus: Bifunctional purine biosynthesis protein PurH (529 aa).

An MGS-like domain is found at 1–148 (MQQRRSVRRA…KNHKDVAIVV (148 aa)).

This sequence belongs to the PurH family.

The enzyme catalyses (6R)-10-formyltetrahydrofolate + 5-amino-1-(5-phospho-beta-D-ribosyl)imidazole-4-carboxamide = 5-formamido-1-(5-phospho-D-ribosyl)imidazole-4-carboxamide + (6S)-5,6,7,8-tetrahydrofolate. It catalyses the reaction IMP + H2O = 5-formamido-1-(5-phospho-D-ribosyl)imidazole-4-carboxamide. The protein operates within purine metabolism; IMP biosynthesis via de novo pathway; 5-formamido-1-(5-phospho-D-ribosyl)imidazole-4-carboxamide from 5-amino-1-(5-phospho-D-ribosyl)imidazole-4-carboxamide (10-formyl THF route): step 1/1. Its pathway is purine metabolism; IMP biosynthesis via de novo pathway; IMP from 5-formamido-1-(5-phospho-D-ribosyl)imidazole-4-carboxamide: step 1/1. In Salmonella arizonae (strain ATCC BAA-731 / CDC346-86 / RSK2980), this protein is Bifunctional purine biosynthesis protein PurH.